The primary structure comprises 290 residues: tRNA (adenine(58)-N(1))-methyltransferase catalytic subunit TRMT61A (290 aa).

An N-acetylserine modification is found at serine 2. Substrate stretches follow at residues 20-22 (LGH), 35-42 (QTQTRHGV), 64-65 (GW), 85-89 (QILYS), and 110-117 (SGTGSGSV). S-adenosyl-L-methionine-binding positions include leucine 87, 114 to 116 (SGS), glutamate 135, arginine 140, 163 to 164 (DV), and aspartate 181. Substrate regions lie at residues 180–183 (LDIP) and 205–212 (SFSPCIEQ). Serine 264 is subject to Phosphoserine. A substrate-binding site is contributed by threonine 279.

The protein belongs to the class I-like SAM-binding methyltransferase superfamily. TRM61 family. Heterotetramer; composed of two copies of TRMT6 and two copies of TRMT61A.

Its subcellular location is the nucleus. It carries out the reaction adenosine(58) in tRNA + S-adenosyl-L-methionine = N(1)-methyladenosine(58) in tRNA + S-adenosyl-L-homocysteine + H(+). It catalyses the reaction an adenosine in mRNA + S-adenosyl-L-methionine = an N(1)-methyladenosine in mRNA + S-adenosyl-L-homocysteine + H(+). Functionally, catalytic subunit of tRNA (adenine-N(1)-)-methyltransferase, which catalyzes the formation of N(1)-methyladenine at position 58 (m1A58) in initiator methionyl-tRNA. Catalytic subunit of mRNA N(1)-methyltransferase complex, which mediates methylation of adenosine residues at the N(1) position of a small subset of mRNAs: N(1) methylation takes place in tRNA T-loop-like structures of mRNAs and is only present at low stoichiometries. This chain is tRNA (adenine(58)-N(1))-methyltransferase catalytic subunit TRMT61A (Trmt61a), found in Mus musculus (Mouse).